The chain runs to 740 residues: ATP-dependent RNA helicase DDX1 (740 aa).

Residues 1-295 (MAAFSEMGVM…APKALIVEPS (295 aa)) are necessary for interaction with HNRNPK. Residues 1–448 (MAAFSEMGVM…DTVHHVVVPV (448 aa)) form an interaction with dsRNA region. The necessary for interaction with RELA stretch occupies residues 1-525 (MAAFSEMGVM…KIDCDNLEQY (525 aa)). The region spanning 2 to 428 (AAFSEMGVMP…SEKIMHFPTW (427 aa)) is the Helicase ATP-binding domain. 46 to 53 (AETGSGKT) contributes to the ATP binding site. Residues 70-247 (DQQEGKKGKA…LKFNFGEEEF (178 aa)) enclose the B30.2/SPRY domain. N6-acetyllysine occurs at positions 239 and 268. Lys-281 carries the post-translational modification N6-acetyllysine; alternate. Lys-281 participates in a covalent cross-link: Glycyl lysine isopeptide (Lys-Gly) (interchain with G-Cter in SUMO2); alternate. Residues 370 to 373 (DEAD) carry the DEAD box motif. Ser-481 is subject to Phosphoserine. A Helicase C-terminal domain is found at 493-681 (KGEYAVRAIK…QVEPDIKVPV (189 aa)). Positions 525–740 (YFMQQGGGPD…YLPNQLFRTF (216 aa)) are necessary for interaction with HNRNPK.

The protein belongs to the DEAD box helicase family. DDX1 subfamily. As to quaternary structure, found in a multi-helicase-TICAM1 complex at least composed of DHX36, DDX1, DDX21 and TICAM1; this complex exists in resting cells with or without poly(I:C) RNA ligand stimulation. Interacts with DHX36. Interacts (via B30.2/SPRY domain) with DDX21 (via N-terminus); this interaction serves as bridges to TICAM1. Interacts with FAM98A (via N- and C-terminus). Interacts with PHF5A (via C-terminus). Interacts with MBNL1. Interacts with CSTF2. Interacts with HNRNPK. Interacts with ATM. Interacts with RELA (via C-terminus). Component of the tRNA-splicing ligase complex. Interacts with PQBP1. Interacts with ERCC6. In terms of processing, phosphorylated by ATM kinase; phosphorylation is increased in response to ionizing radiation (IR).

It is found in the nucleus. The protein localises to the cytoplasm. It localises to the cytoplasmic granule. The protein resides in the cytosol. Its subcellular location is the mitochondrion. It catalyses the reaction ATP + H2O = ADP + phosphate + H(+). Acts as an ATP-dependent RNA helicase, able to unwind both RNA-RNA and RNA-DNA duplexes. Possesses 5' single-stranded RNA overhang nuclease activity. Possesses ATPase activity on various RNA, but not DNA polynucleotides. May play a role in RNA clearance at DNA double-strand breaks (DSBs), thereby facilitating the template-guided repair of transcriptionally active regions of the genome. Together with RELA, acts as a coactivator to enhance NF-kappa-B-mediated transcriptional activation. Acts as a positive transcriptional regulator of cyclin CCND2 expression. Binds to the cyclin CCND2 promoter region. Associates with chromatin at the NF-kappa-B promoter region via association with RELA. Binds to poly(A) RNA. May be involved in 3'-end cleavage and polyadenylation of pre-mRNAs. Component of the tRNA-splicing ligase complex required to facilitate the enzymatic turnover of catalytic subunit RTCB: together with archease (ZBTB8OS), acts by facilitating the guanylylation of RTCB, a key intermediate step in tRNA ligation. Component of a multi-helicase-TICAM1 complex that acts as a cytoplasmic sensor of viral double-stranded RNA (dsRNA) and plays a role in the activation of a cascade of antiviral responses including the induction of pro-inflammatory cytokines via the adapter molecule TICAM1. Specifically binds (via helicase ATP-binding domain) on both short and long poly(I:C) dsRNA. In Bos taurus (Bovine), this protein is ATP-dependent RNA helicase DDX1 (DDX1).